Reading from the N-terminus, the 392-residue chain is Methylthioribose-1-phosphate isomerase (392 aa).

Asp267 serves as the catalytic Proton donor.

This sequence belongs to the eIF-2B alpha/beta/delta subunits family. MtnA subfamily.

The protein resides in the cytoplasm. Its subcellular location is the nucleus. The enzyme catalyses 5-(methylsulfanyl)-alpha-D-ribose 1-phosphate = 5-(methylsulfanyl)-D-ribulose 1-phosphate. The protein operates within amino-acid biosynthesis; L-methionine biosynthesis via salvage pathway; L-methionine from S-methyl-5-thio-alpha-D-ribose 1-phosphate: step 1/6. Functionally, catalyzes the interconversion of methylthioribose-1-phosphate (MTR-1-P) into methylthioribulose-1-phosphate (MTRu-1-P). The sequence is that of Methylthioribose-1-phosphate isomerase from Ajellomyces dermatitidis (strain ER-3 / ATCC MYA-2586) (Blastomyces dermatitidis).